The following is a 429-amino-acid chain: Enolase (429 aa).

Position 163 (Gln-163) interacts with (2R)-2-phosphoglycerate. Glu-205 functions as the Proton donor in the catalytic mechanism. Mg(2+) is bound by residues Asp-242, Glu-285, and Asp-312. Residues Lys-337, Arg-366, Ser-367, and Lys-388 each coordinate (2R)-2-phosphoglycerate. The active-site Proton acceptor is the Lys-337.

The protein belongs to the enolase family. Mg(2+) is required as a cofactor.

The protein resides in the cytoplasm. The protein localises to the secreted. It localises to the cell surface. It catalyses the reaction (2R)-2-phosphoglycerate = phosphoenolpyruvate + H2O. It functions in the pathway carbohydrate degradation; glycolysis; pyruvate from D-glyceraldehyde 3-phosphate: step 4/5. Catalyzes the reversible conversion of 2-phosphoglycerate (2-PG) into phosphoenolpyruvate (PEP). It is essential for the degradation of carbohydrates via glycolysis. In Azoarcus sp. (strain BH72), this protein is Enolase.